The sequence spans 601 residues: Proline--tRNA ligase (601 aa).

The protein belongs to the class-II aminoacyl-tRNA synthetase family. ProS type 1 subfamily. In terms of assembly, homodimer.

The protein localises to the cytoplasm. It carries out the reaction tRNA(Pro) + L-proline + ATP = L-prolyl-tRNA(Pro) + AMP + diphosphate. In terms of biological role, catalyzes the attachment of proline to tRNA(Pro) in a two-step reaction: proline is first activated by ATP to form Pro-AMP and then transferred to the acceptor end of tRNA(Pro). As ProRS can inadvertently accommodate and process non-cognate amino acids such as alanine and cysteine, to avoid such errors it has two additional distinct editing activities against alanine. One activity is designated as 'pretransfer' editing and involves the tRNA(Pro)-independent hydrolysis of activated Ala-AMP. The other activity is designated 'posttransfer' editing and involves deacylation of mischarged Ala-tRNA(Pro). The misacylated Cys-tRNA(Pro) is not edited by ProRS. In Trichodesmium erythraeum (strain IMS101), this protein is Proline--tRNA ligase.